A 180-amino-acid polypeptide reads, in one-letter code: Pro-glucagon (180 aa).

The N-terminal stretch at 1–20 (MKSVYFVAGLFIMLAQGSWQ) is a signal peptide. The disordered stretch occupies residues 23–58 (LQDTEEKPRSVSASQTDMLDDPDQMNEDKRHSQGTF). Serine 54 bears the Phosphoserine mark. The propeptide occupies 84–89 (NRNNIA). Serine 105 and serine 108 each carry phosphoserine. Residue arginine 127 is modified to Arginine amide. Positions 131-145 (DFPEEVAIVEELGRR) are excised as a propeptide. Residues serine 150 and serine 152 each carry the phosphoserine modification.

It belongs to the glucagon family. In terms of processing, proglucagon is post-translationally processed in a tissue-specific manner in pancreatic A cells and intestinal L cells. In pancreatic A cells, the major bioactive hormone is glucagon cleaved by PCSK2/PC2. In the intestinal L cells PCSK1/PC1 liberates GLP-1, GLP-2, glicentin and oxyntomodulin. GLP-1 is further N-terminally truncated by post-translational processing in the intestinal L cells resulting in GLP-1(7-37) GLP-1-(7-36)amide. The C-terminal amidation is neither important for the metabolism of GLP-1 nor for its effects on the endocrine pancreas.

The protein localises to the secreted. In terms of biological role, plays a key role in glucose metabolism and homeostasis. Regulates blood glucose by increasing gluconeogenesis and decreasing glycolysis. A counterregulatory hormone of insulin, raises plasma glucose levels in response to insulin-induced hypoglycemia. Plays an important role in initiating and maintaining hyperglycemic conditions in diabetes. Potent stimulator of glucose-dependent insulin release. Also stimulates insulin release in response to IL6. Plays important roles on gastric motility and the suppression of plasma glucagon levels. May be involved in the suppression of satiety and stimulation of glucose disposal in peripheral tissues, independent of the actions of insulin. Has growth-promoting activities on intestinal epithelium. May also regulate the hypothalamic pituitary axis (HPA) via effects on LH, TSH, CRH, oxytocin, and vasopressin secretion. Increases islet mass through stimulation of islet neogenesis and pancreatic beta cell proliferation. Inhibits beta cell apoptosis. Its function is as follows. Stimulates intestinal growth and up-regulates villus height in the small intestine, concomitant with increased crypt cell proliferation and decreased enterocyte apoptosis. The gastrointestinal tract, from the stomach to the colon is the principal target for GLP-2 action. Plays a key role in nutrient homeostasis, enhancing nutrient assimilation through enhanced gastrointestinal function, as well as increasing nutrient disposal. Stimulates intestinal glucose transport and decreases mucosal permeability. Functionally, significantly reduces food intake. Inhibits gastric emptying in humans. Suppression of gastric emptying may lead to increased gastric distension, which may contribute to satiety by causing a sensation of fullness. In terms of biological role, may modulate gastric acid secretion and the gastro-pyloro-duodenal activity. May play an important role in intestinal mucosal growth in the early period of life. This is Pro-glucagon (GCG) from Cavia porcellus (Guinea pig).